The chain runs to 206 residues: Small ribosomal subunit protein uS4 (206 aa).

Residues 96-156 form the S4 RNA-binding domain; that stretch reads CRLDNVVYRM…EKSLGQLRIV (61 aa).

This sequence belongs to the universal ribosomal protein uS4 family. As to quaternary structure, part of the 30S ribosomal subunit. Contacts protein S5. The interaction surface between S4 and S5 is involved in control of translational fidelity.

Its function is as follows. One of the primary rRNA binding proteins, it binds directly to 16S rRNA where it nucleates assembly of the body of the 30S subunit. Functionally, with S5 and S12 plays an important role in translational accuracy. The chain is Small ribosomal subunit protein uS4 from Pseudomonas putida (strain ATCC 47054 / DSM 6125 / CFBP 8728 / NCIMB 11950 / KT2440).